Here is a 167-residue protein sequence, read N- to C-terminus: Glutathione peroxidase-like peroxiredoxin 1 (167 aa).

Cysteine 36 functions as the Cysteine sulfenic acid (-SOH) intermediate in the catalytic mechanism. Cysteine 36 and cysteine 82 are disulfide-bonded.

The protein belongs to the glutathione peroxidase family. In terms of assembly, monomer.

It localises to the peroxisome matrix. The protein localises to the mitochondrion outer membrane. It carries out the reaction 2 glutathione + H2O2 = glutathione disulfide + 2 H2O. The enzyme catalyses a hydroperoxide + [thioredoxin]-dithiol = an alcohol + [thioredoxin]-disulfide + H2O. Functionally, glutathione peroxidase-like protein that protects cells from phospholipid hydroperoxides and nonphospholipid peroxides during oxidative stress. Has peroxidase activity using thioredoxin or glutathione as a reducing power. Involved in peroxisome formation. This chain is Glutathione peroxidase-like peroxiredoxin 1, found in Saccharomyces cerevisiae (strain ATCC 204508 / S288c) (Baker's yeast).